Here is a 179-residue protein sequence, read N- to C-terminus: Translation initiation factor IF-3 (179 aa).

This sequence belongs to the IF-3 family. In terms of assembly, monomer.

It localises to the cytoplasm. Its function is as follows. IF-3 binds to the 30S ribosomal subunit and shifts the equilibrium between 70S ribosomes and their 50S and 30S subunits in favor of the free subunits, thus enhancing the availability of 30S subunits on which protein synthesis initiation begins. This chain is Translation initiation factor IF-3, found in Bradyrhizobium diazoefficiens (strain JCM 10833 / BCRC 13528 / IAM 13628 / NBRC 14792 / USDA 110).